A 101-amino-acid polypeptide reads, in one-letter code: uncharacterized protein (101 aa).

A signal peptide spans 1 to 25 (MISIPFRSTMSRTLVFIILPTVLSC).

This is an uncharacterized protein from Saccharomyces cerevisiae (strain ATCC 204508 / S288c) (Baker's yeast).